Here is a 224-residue protein sequence, read N- to C-terminus: 7-cyano-7-deazaguanine synthase (224 aa).

Residue 14-24 participates in ATP binding; sequence FSGGQDSTTCL. Residues C190, C198, C201, and C204 each contribute to the Zn(2+) site.

The protein belongs to the QueC family. The cofactor is Zn(2+).

It catalyses the reaction 7-carboxy-7-deazaguanine + NH4(+) + ATP = 7-cyano-7-deazaguanine + ADP + phosphate + H2O + H(+). Its pathway is purine metabolism; 7-cyano-7-deazaguanine biosynthesis. In terms of biological role, catalyzes the ATP-dependent conversion of 7-carboxy-7-deazaguanine (CDG) to 7-cyano-7-deazaguanine (preQ(0)). The protein is 7-cyano-7-deazaguanine synthase of Haemophilus ducreyi (strain 35000HP / ATCC 700724).